The chain runs to 370 residues: Dihydrolipoyllysine-residue acetyltransferase component of acetoin cleaving system (370 aa).

Residues 4–79 (IHTLTMPKWG…PVGALLAVVV (76 aa)) enclose the Lipoyl-binding domain. K45 is subject to N6-lipoyllysine. Positions 135 to 355 (PLVLVHGFGG…EAGHMVQMEA (221 aa)) constitute an AB hydrolase-1 domain.

Requires (R)-lipoate as cofactor.

It catalyses the reaction N(6)-[(R)-dihydrolipoyl]-L-lysyl-[protein] + acetyl-CoA = N(6)-[(R)-S(8)-acetyldihydrolipoyl]-L-lysyl-[protein] + CoA. The protein operates within ketone degradation; acetoin degradation. This is Dihydrolipoyllysine-residue acetyltransferase component of acetoin cleaving system (acoC) from Pseudomonas putida (Arthrobacter siderocapsulatus).